The primary structure comprises 1689 residues: DNA-directed RNA polymerase I subunit rpa1 (1689 aa).

Residues cysteine 63, cysteine 66, cysteine 73, and histidine 76 each contribute to the Zn(2+) site. 2 positions are modified to phosphoserine: serine 159 and serine 161. The segment covering 269 to 280 (VLRDTSKKHHED) has biased composition (basic and acidic residues). The interval 269 to 295 (VLRDTSKKHHEDEGYDGDSDSSNESEV) is disordered. Residues 281 to 295 (EGYDGDSDSSNESEV) are compositionally biased toward acidic residues. Mg(2+) contacts are provided by aspartate 643, aspartate 645, and aspartate 647. The tract at residues 1005–1017 (PQEYYFHCMAGRE) is bridging helix. The disordered stretch occupies residues 1346 to 1440 (RKSGGKDDTV…EEDEGFKSDE (95 aa)). Serine 1438 and serine 1441 each carry phosphoserine.

Belongs to the RNA polymerase beta' chain family. Component of the RNA polymerase I (Pol I) complex consisting of at least 13 subunits.

It localises to the nucleus. The protein localises to the nucleolus. It catalyses the reaction RNA(n) + a ribonucleoside 5'-triphosphate = RNA(n+1) + diphosphate. Functionally, DNA-dependent RNA polymerase catalyzes the transcription of DNA into RNA using the four ribonucleoside triphosphates as substrates. Largest and catalytic core component of RNA polymerase I which synthesizes ribosomal RNA precursors. Forms the polymerase active center together with the second largest subunit. A single stranded DNA template strand of the promoter is positioned within the central active site cleft of Pol I. A bridging helix emanates from RPA1 and crosses the cleft near the catalytic site and is thought to promote translocation of Pol I by acting as a ratchet that moves the RNA-DNA hybrid through the active site by switching from straight to bent conformations at each step of nucleotide addition. In Schizosaccharomyces pombe (strain 972 / ATCC 24843) (Fission yeast), this protein is DNA-directed RNA polymerase I subunit rpa1 (rpa1).